Reading from the N-terminus, the 184-residue chain is Adenine phosphoribosyltransferase (184 aa).

This sequence belongs to the purine/pyrimidine phosphoribosyltransferase family. Homodimer.

The protein localises to the cytoplasm. It carries out the reaction AMP + diphosphate = 5-phospho-alpha-D-ribose 1-diphosphate + adenine. Its pathway is purine metabolism; AMP biosynthesis via salvage pathway; AMP from adenine: step 1/1. Its function is as follows. Catalyzes a salvage reaction resulting in the formation of AMP, that is energically less costly than de novo synthesis. The polypeptide is Adenine phosphoribosyltransferase (Shewanella putrefaciens (strain CN-32 / ATCC BAA-453)).